Here is a 223-residue protein sequence, read N- to C-terminus: Serine/threonine/tyrosine-interacting protein B (223 aa).

The Tyrosine-protein phosphatase domain occupies 28–176 (EMQEILPGLF…LQEYEAIYLA (149 aa)).

The protein belongs to the protein-tyrosine phosphatase family. Non-receptor class subfamily.

Functionally, catalytically inactive phosphatase. The chain is Serine/threonine/tyrosine-interacting protein B (styx-b) from Xenopus laevis (African clawed frog).